We begin with the raw amino-acid sequence, 391 residues long: Calcium-binding and spermatid-specific protein 1 (391 aa).

Disordered stretches follow at residues 1 to 23 (MAED…TPTE), 90 to 110 (PEKE…GSIT), and 152 to 221 (KEVV…KEVT). A compositionally biased stretch (low complexity) spans 90 to 101 (PEKEITTPTETP). Serine 253 and serine 269 each carry phosphoserine. Residues 271–299 (EKAKDNVEDPLNDEESTDGANDWMEKETA) are disordered. A compositionally biased stretch (acidic residues) spans 278 to 287 (EDPLNDEEST). Phosphoserine occurs at positions 314, 347, 357, 372, and 376. The segment at 330–351 (EESHVNTTDLPENETTESVTNV) is disordered.

In terms of tissue distribution, detected only in testis. Expressed from stages X to VIII of the seminiferous epithelial cycle. Expressed from step 13 to step 16 of spermatid development (at protein level).

The protein resides in the cytoplasm. It is found in the mitochondrion inner membrane. The protein localises to the cell projection. Its subcellular location is the cilium. It localises to the flagellum. The protein resides in the cytoplasmic vesicle. It is found in the secretory vesicle. The protein localises to the acrosome. Calcium-binding protein. Essential for maintaining the structural integrity of the sperm flagella. The sequence is that of Calcium-binding and spermatid-specific protein 1 (Cabs1) from Mus musculus (Mouse).